The sequence spans 168 residues: Short form salivary protein D7R2 (168 aa).

An N-terminal signal peptide occupies residues 1 to 21 (MFKKLLLSVGLVWCLISLGQA). Cystine bridges form between C30–C62, C43–C168, and C101–C120. E31 and R46 together coordinate noradrenaline. Serotonin is bound at residue E31. H59, Y118, D135, and E138 together coordinate serotonin. The histamine site is built by Y118, D135, and E138. D135 and E138 together coordinate noradrenaline.

It belongs to the PBP/GOBP family. Female saliva (at protein level). Female salivary gland. Not detected in female carcass without salivary glands. Not detected in male tissues.

The protein resides in the secreted. In terms of biological role, modulates blood feeding of female mosquitoes on vertebrate species by binding and sequestering different mediators involved in the host response. Binds serotonin, noradrenaline, histamine and adrenaline. Inhibits histamine-, serotonin- and noradrenaline-induced smooth muscle contraction. Exhibits vasodilating activity. This is Short form salivary protein D7R2 from Anopheles gambiae (African malaria mosquito).